Here is a 156-residue protein sequence, read N- to C-terminus: Small ribosomal subunit protein bS16 (156 aa).

Composition is skewed to low complexity over residues alanine 113–threonine 123 and glutamate 137–serine 156. Residues alanine 113 to serine 156 are disordered.

Belongs to the bacterial ribosomal protein bS16 family.

This chain is Small ribosomal subunit protein bS16, found in Mycolicibacterium smegmatis (strain ATCC 700084 / mc(2)155) (Mycobacterium smegmatis).